A 148-amino-acid polypeptide reads, in one-letter code: uncharacterized protein (148 aa).

A disordered region spans residues 83–148; sequence QPAVIPPVKA…TKKSNKKTRS (66 aa). Basic residues-rich tracts occupy residues 92–103 and 113–124; these read AKPKATKKKTPV and KQTKPKQSKPKS.

This is an uncharacterized protein from Mycoplasma genitalium (strain ATCC 33530 / DSM 19775 / NCTC 10195 / G37) (Mycoplasmoides genitalium).